Consider the following 692-residue polypeptide: A-kinase anchor protein 8 (692 aa).

The tract at residues 1–195 (MDQGYGGYGA…FMRGRGQGRF (195 aa)) is interaction with MCM2. An interaction with DPY30 region spans residues 1 to 210 (MDQGYGGYGA…PGTFMRSDPF (210 aa)). At R109 the chain carries Asymmetric dimethylarginine; alternate. R109 is modified (omega-N-methylarginine; alternate). Positions 109–201 (RGGSGGGGEG…QGRFQDRSNP (93 aa)) are interaction with DDX5. The residue at position 112 (S112) is a Phosphoserine. Disordered stretches follow at residues 168–203 (GQYS…NPGT), 231–254 (GGRG…SMAP), and 269–382 (STMP…RTRD). Positions 172-182 (ECRDPARERGS) are enriched in basic and acidic residues. The residue at position 199 (S199) is a Phosphoserine. Omega-N-methylarginine is present on residues R233 and R277. Basic and acidic residues-rich tracts occupy residues 281 to 297 (RMRD…DRFG) and 314 to 323 (PDTKLARVDS). Positions 289–306 (KRRGFDRFGPDGTGRKRK) match the Bipartite nuclear localization signal motif. K317 participates in a covalent cross-link: Glycyl lysine isopeptide (Lys-Gly) (interchain with G-Cter in SUMO2). S323, S328, and S339 each carry phosphoserine. Residues 324–334 (EGDFSENDDAA) are compositionally biased toward acidic residues. An involved in chromatin-binding region spans residues 387–450 (RIQFACSVCK…NKKIEKRRQE (64 aa)). 2 C2H2 AKAP95-type zinc fingers span residues 392–414 (CSVC…SKFH) and 481–504 (CLAC…SVDH). Residues 525 to 569 (SVLNNRHIVKMLEKYLKGEDPFTSETVDPEMEGDDNLGGEDKKET) form an involved in condensin complex recruitment region. Positions 545-571 (PFTSETVDPEMEGDDNLGGEDKKETPE) are disordered. A compositionally biased stretch (acidic residues) spans 551–562 (VDPEMEGDDNLG). K567 participates in a covalent cross-link: Glycyl lysine isopeptide (Lys-Gly) (interchain with G-Cter in SUMO2). The interval 572-589 (EVAADVLAEVITAAVRAV) is RII-binding. The interval 576–593 (DVLAEVITAAVRAVDGEG) is required for interaction with MYCBP. The interval 592-692 (EGAPAPESSG…AESKDAVPTE (101 aa)) is disordered. The segment covering 634–646 (AHEKGVPKARSEA) has biased composition (basic and acidic residues). The residue at position 662 (S662) is a Phosphoserine. Residues 663–675 (AQTRVAPAPAAAD) are compositionally biased toward low complexity. Over residues 683–692 (AESKDAVPTE) the composition is skewed to basic and acidic residues. S685 bears the Phosphoserine mark.

The protein belongs to the AKAP95 family. In terms of assembly, binds to the PKA RII-alpha regulatory subunit PRKAR2A (phosphorylated at 'Thr-54') during mitosis. Interacts (via C-terminus) with FIGN. Interacts with NCAPD2, CCND1, MCM2, RPS6KA1, PDE4A. Interacts with CCND3, CCNE1, DDX5, CASP3. Interacts with NFKB1; detetcted in the cytoplasm. Interacts with MYCBP; MYCBP is translocated to the nucleus and the interaction prevents the association of the PKA catalytic subunit leading to suppression of PKA activity. Interacts with DPY30; mediating AKAP8 association with at least the MLL4/WBP7 HMT complex. Interacts with HDAC3; increased during mitosis. Interacts with GJA1; in the nucleus and in the nuclear membrane; the nuclear association increases with progress of cell cycle G1, S and G2 phase and decreases in M phase. Post-translationally, phosphorylated on tyrosine residues probably by SRC subfamily protein kinases; multiple phosphorylation is leading to dissociation from nuclear structures implicated in chromatin structural changes. In terms of tissue distribution, highly expressed in heart, liver, skeletal muscle, kidney and pancreas. Expressed in mature dendritic cells.

The protein localises to the nucleus. The protein resides in the nucleus matrix. It localises to the nucleolus. Its subcellular location is the cytoplasm. Its function is as follows. Anchoring protein that mediates the subcellular compartmentation of cAMP-dependent protein kinase (PKA type II). Acts as an anchor for a PKA-signaling complex onto mitotic chromosomes, which is required for maintenance of chromosomes in a condensed form throughout mitosis. Recruits condensin complex subunit NCAPD2 to chromosomes required for chromatin condensation; the function appears to be independent from PKA-anchoring. May help to deliver cyclin D/E to CDK4 to facilitate cell cycle progression. Required for cell cycle G2/M transition and histone deacetylation during mitosis. In mitotic cells recruits HDAC3 to the vicinity of chromatin leading to deacetylation and subsequent phosphorylation at 'Ser-10' of histone H3; in this function may act redundantly with AKAP8L. Involved in nuclear retention of RPS6KA1 upon ERK activation thus inducing cell proliferation. May be involved in regulation of DNA replication by acting as scaffold for MCM2. Enhances HMT activity of the KMT2 family MLL4/WBP7 complex and is involved in transcriptional regulation. In a teratocarcinoma cell line is involved in retinoic acid-mediated induction of developmental genes implicating H3 'Lys-4' methylation. May be involved in recruitment of active CASP3 to the nucleus in apoptotic cells. May act as a carrier protein of GJA1 for its transport to the nucleus. May play a repressive role in the regulation of rDNA transcription. Preferentially binds GC-rich DNA in vitro. In cells, associates with ribosomal RNA (rRNA) chromatin, preferentially with rRNA promoter and transcribed regions. Involved in modulation of Toll-like receptor signaling. Required for the cAMP-dependent suppression of TNF-alpha in early stages of LPS-induced macrophage activation; the function probably implicates targeting of PKA to NFKB1. The chain is A-kinase anchor protein 8 (AKAP8) from Homo sapiens (Human).